Here is a 516-residue protein sequence, read N- to C-terminus: Coiled-coil domain-containing protein 149 (516 aa).

Over residues 1–18 the composition is skewed to basic and acidic residues; it reads MANQLRERHQSLKKKYGE. A disordered region spans residues 1–29; it reads MANQLRERHQSLKKKYGELIDGDPSVPPE. Coiled coils occupy residues 1-195 and 259-286; these read MANQ…ALEK and IQHQ…LEVS. Positions 321–332 are enriched in basic and acidic residues; that stretch reads PHHKPLTNEEHG. Disordered regions lie at residues 321–350 and 406–452; these read PHHK…SDNE and ETSF…SLGD. Residues 414–436 are compositionally biased toward polar residues; sequence DSQSTASSQENHDNLQSPFSSPE.

This sequence belongs to the CCDC149 family.

In Xenopus laevis (African clawed frog), this protein is Coiled-coil domain-containing protein 149 (ccdc149).